The sequence spans 466 residues: Adenosylhomocysteinase (466 aa).

Substrate is bound by residues T57, D132, and E192. 193-195 (TTT) serves as a coordination point for NAD(+). The substrate site is built by K222 and D226. Residues N227, 256-261 (GYGDVG), E279, N314, 335-337 (IGH), and N380 contribute to the NAD(+) site.

It belongs to the adenosylhomocysteinase family. It depends on NAD(+) as a cofactor.

The protein resides in the cytoplasm. The catalysed reaction is S-adenosyl-L-homocysteine + H2O = L-homocysteine + adenosine. It participates in amino-acid biosynthesis; L-homocysteine biosynthesis; L-homocysteine from S-adenosyl-L-homocysteine: step 1/1. May play a key role in the regulation of the intracellular concentration of adenosylhomocysteine. The sequence is that of Adenosylhomocysteinase from Rhizobium leguminosarum bv. trifolii (strain WSM2304).